The following is a 591-amino-acid chain: ATP-dependent RNA helicase DDX55 (591 aa).

Residues 9–37 (WSSLPVALSPGVLRALQDLGFDRMTPVQS) carry the Q motif motif. A Helicase ATP-binding domain is found at 40–223 (IPLFMSNKDV…RAGLRNPVRI (184 aa)). 53–60 (AVTGSGKT) contributes to the ATP binding site. The DEAD box signature appears at 171 to 174 (DEAD). Residues 254 to 402 (KFNQLVHFLR…EMQPQRNVLD (149 aa)) enclose the Helicase C-terminal domain. Disordered regions lie at residues 482 to 559 (DSIP…NDTR) and 571 to 591 (EEEFEKRLTGSQSKFKEAAAD). Residues 485–513 (PFKDKNREKQRQKQLEQQRKEREESEGKK) are compositionally biased toward basic and acidic residues. Residues 486-542 (FKDKNREKQRQKQLEQQRKEREESEGKKKFIKNKSWSKQKAKREKKRKLTAKRKREE) adopt a coiled-coil conformation. Positions 514–538 (KFIKNKSWSKQKAKREKKRKLTAKR) are enriched in basic residues. An important for nuclear localization region spans residues 533 to 562 (KLTAKRKREEGSDMEDEDMEELLNDTRLLK). Over residues 544–555 (SDMEDEDMEELL) the composition is skewed to acidic residues.

The protein belongs to the DEAD box helicase family. DDX55/SPB4 subfamily. As to quaternary structure, interacts with 28S rRNA. Interacts with double-stranded RNA substrates in vitro; the interaction stimulates ATPase activity.

The protein localises to the nucleus. Its subcellular location is the nucleoplasm. It catalyses the reaction ATP + H2O = ADP + phosphate + H(+). Probable ATP-binding RNA helicase. Has ATPase activity and is involved in the maturation of precursor large subunit rRNAs. This chain is ATP-dependent RNA helicase DDX55 (DDX55), found in Gallus gallus (Chicken).